The following is a 414-amino-acid chain: Probable acetyl-CoA acetyltransferase (414 aa).

The active-site Acyl-thioester intermediate is cysteine 110. CoA is bound by residues tyrosine 205, 244–246, and lysine 249; that span reads KVL. A K(+)-binding site is contributed by tyrosine 205. K(+)-binding residues include alanine 266 and alanine 268. Serine 269 contacts CoA. Valine 366 lines the K(+) pocket. Residues histidine 370 and cysteine 400 each act as proton acceptor in the active site.

Belongs to the thiolase-like superfamily. Thiolase family.

The catalysed reaction is 2 acetyl-CoA = acetoacetyl-CoA + CoA. The polypeptide is Probable acetyl-CoA acetyltransferase (Dictyostelium discoideum (Social amoeba)).